Reading from the N-terminus, the 101-residue chain is Small ribosomal subunit protein uS10 (101 aa).

The protein belongs to the universal ribosomal protein uS10 family. Part of the 30S ribosomal subunit.

In terms of biological role, involved in the binding of tRNA to the ribosomes. This Rhodococcus erythropolis (strain PR4 / NBRC 100887) protein is Small ribosomal subunit protein uS10.